The chain runs to 189 residues: PTS system glucose-specific EIIA component (189 aa).

One can recognise a PTS EIIA type-1 domain in the interval 31 to 135; sequence DEAFAEKIVG…SVITPVVIAN (105 aa). Zn(2+) is bound by residues H68 and H83. H83 (tele-phosphohistidine intermediate; for EIIA activity) is an active-site residue. Phosphohistidine; by HPr is present on H83.

Heterodimer with glycerol kinase (glpk). The cofactor is Zn(2+).

Its subcellular location is the cytoplasm. Its function is as follows. The phosphoenolpyruvate-dependent sugar phosphotransferase system (sugar PTS), a major carbohydrate active transport system, catalyzes the phosphorylation of incoming sugar substrates concomitantly with their translocation across the cell membrane. The enzyme II complex composed of PtsG and Crr is involved in glucose transport. This chain is PTS system glucose-specific EIIA component (crr), found in Borreliella burgdorferi (strain ATCC 35210 / DSM 4680 / CIP 102532 / B31) (Borrelia burgdorferi).